Reading from the N-terminus, the 61-residue chain is Alpha-conotoxin-like Tx1.2 (61 aa).

An N-terminal signal peptide occupies residues 1 to 20 (MFTVFLLVVLATTVVSFTSG). Positions 21–42 (RSTFRGRNAAAKASGLVSLTDR) are excised as a propeptide. 4-hydroxyproline is present on residues Pro44 and Pro50. 2 disulfide bridges follow: Cys46–Cys52 and Cys47–Cys60. Residues 48–50 (SHP) form a ser-Xaa-Pro motif, crucial for potent interaction with nAChR region.

The protein belongs to the conotoxin A superfamily. As to expression, expressed by the venom duct.

The protein localises to the secreted. Its function is as follows. Alpha-conotoxins act on postsynaptic membranes, they bind to the nicotinic acetylcholine receptors (nAChR) and thus inhibit them. This toxin also inhibits high voltage-activated (HVA) calcium channel currents in rat DRG neurons (8% inhibition at 1 uM toxin) probably by activating GABA(B) receptors (GABBR1 and/or GABBR2). The polypeptide is Alpha-conotoxin-like Tx1.2 (Conus textile (Cloth-of-gold cone)).